We begin with the raw amino-acid sequence, 842 residues long: CRM-domain containing factor CFM3, chloroplastic/mitochondrial (842 aa).

The N-terminal 82 residues, 1–82, are a transit peptide targeting the chloroplast and mitochondrion; that stretch reads MAMASSPACH…RSSGRSTMSL (82 aa). 3 disordered regions span residues 49-80, 141-160, and 254-290; these read AALD…RSTM, RFPW…SARS, and VDYD…LPTE. One can recognise a CRM 1 domain in the interval 167-263; sequence LTLPAAELRR…VDYDEPEPTK (97 aa). Over residues 280 to 290 the composition is skewed to polar residues; it reads GSSNPSLLPTE. 2 consecutive CRM domains span residues 371–468 and 582–682; these read PSLS…ELAE and ETIT…SSLR. Residues 703 to 732 are a coiled coil; that stretch reads QALSRHFAKLNRKVERLKAELVQMEDVKEQ. Residues 768-842 are disordered; that stretch reads VAGATADDDG…DRRNHDVNEY (75 aa). Residues 786–812 show a composition bias toward acidic residues; it reads DEADYPDSDDEAGDCSEDEGEDDEDEA. Basic and acidic residues predominate over residues 831–842; it reads DTDRRNHDVNEY.

As to quaternary structure, interacts with RNA. Part of large ribonucleo-protein particles that contain CAF1 and/or CAF2, and RNC1.

The protein localises to the plastid. It is found in the chloroplast stroma. The protein resides in the mitochondrion. Functionally, binds specific group II introns in chloroplasts and facilitates their splicing. Acts on subgroup IIB introns. The substrates of the subgroup IIB also require the CRM domain proteins CAF1 or CAF2, with a simultaneous binding of CFM3 and CAF1 or CAF2. May influence the biogenesis of the mitochondrial small ribosomal subunit. The sequence is that of CRM-domain containing factor CFM3, chloroplastic/mitochondrial from Zea mays (Maize).